The primary structure comprises 153 residues: MIALIQRVAQARVTVAGRTTGEIGAGLLALVCAERGDTEAQAERLLAKMLSYRVFSDADGKMNLPVQNMDGNGNPGGLLVVSQFTLAADTNSGTRPSFTPAASPEDGRRLYEHFVAQARAAHPQVQTGEFGAMMQVSLVNDGPVTFWLRVPPA.

A Gly-cisPro motif, important for rejection of L-amino acids motif is present at residues 142–143; the sequence is GP.

Belongs to the DTD family. In terms of assembly, homodimer.

The protein resides in the cytoplasm. The enzyme catalyses glycyl-tRNA(Ala) + H2O = tRNA(Ala) + glycine + H(+). It carries out the reaction a D-aminoacyl-tRNA + H2O = a tRNA + a D-alpha-amino acid + H(+). In terms of biological role, an aminoacyl-tRNA editing enzyme that deacylates mischarged D-aminoacyl-tRNAs. Also deacylates mischarged glycyl-tRNA(Ala), protecting cells against glycine mischarging by AlaRS. Acts via tRNA-based rather than protein-based catalysis; rejects L-amino acids rather than detecting D-amino acids in the active site. By recycling D-aminoacyl-tRNA to D-amino acids and free tRNA molecules, this enzyme counteracts the toxicity associated with the formation of D-aminoacyl-tRNA entities in vivo and helps enforce protein L-homochirality. This chain is D-aminoacyl-tRNA deacylase, found in Cupriavidus taiwanensis (strain DSM 17343 / BCRC 17206 / CCUG 44338 / CIP 107171 / LMG 19424 / R1) (Ralstonia taiwanensis (strain LMG 19424)).